Consider the following 768-residue polypeptide: Vitamin B12-dependent ribonucleoside-diphosphate reductase (768 aa).

In terms of domain architecture, ATP-cone spans 3–97; that stretch reads KEVVKRDGTV…LYREKRRAIR (95 aa). Residues S234, 249–250, G278, 432–436, and 579–583 contribute to the substrate site; these read AC, NPCGE, and PTGTI. Residues C250 and C445 are joined by a disulfide bond. N432 acts as the Proton acceptor in catalysis. Residue C434 is the Cysteine radical intermediate of the active site. Residue E436 is the Proton acceptor of the active site.

Belongs to the ribonucleoside diphosphate reductase class-2 family. Monomer. Adenosylcob(III)alamin is required as a cofactor.

The catalysed reaction is a 2'-deoxyribonucleoside 5'-diphosphate + [thioredoxin]-disulfide + H2O = a ribonucleoside 5'-diphosphate + [thioredoxin]-dithiol. Its function is as follows. Provides the precursors necessary for DNA synthesis. Catalyzes the biosynthesis of deoxyribonucleotides from the corresponding ribonucleotides. This Thermoplasma acidophilum (strain ATCC 25905 / DSM 1728 / JCM 9062 / NBRC 15155 / AMRC-C165) protein is Vitamin B12-dependent ribonucleoside-diphosphate reductase.